A 268-amino-acid polypeptide reads, in one-letter code: Inositol monophosphatase 3 (268 aa).

The Mg(2+) site is built by E71, D91, L93, and D94. E71 is a binding site for substrate. Residues 93–96, 194–196, E213, and D221 each bind substrate; these read LDGT and GSC. D221 contributes to the Mg(2+) binding site.

This sequence belongs to the inositol monophosphatase superfamily. Mg(2+) is required as a cofactor. Expressed in the shoot apex, roots, stems, leaves, flowers and young and mature green fruits.

It carries out the reaction a myo-inositol phosphate + H2O = myo-inositol + phosphate. The protein operates within polyol metabolism; myo-inositol biosynthesis; myo-inositol from D-glucose 6-phosphate: step 2/2. Its function is as follows. Responsible for the provision of inositol required for synthesis of phosphatidylinositol and polyphosphoinositides. In Solanum lycopersicum (Tomato), this protein is Inositol monophosphatase 3 (IMP3).